The sequence spans 246 residues: 2',3'-cyclic-nucleotide 3'-phosphodiesterase (246 aa).

His40 functions as the Proton donor/acceptor in the catalytic mechanism. A substrate-binding site is contributed by Thr42. Over residues 133-146 (QNPQLYTKDNNGNT) the composition is skewed to polar residues. Residues 133-159 (QNPQLYTKDNNGNTIRRKPSKKKSKTT) form a disordered region. A compositionally biased stretch (basic residues) spans 147–156 (IRRKPSKKKS). Catalysis depends on His188, which acts as the Proton donor/acceptor. Residues Ser190 and Tyr193 each contribute to the substrate site.

It belongs to the 2H phosphoesterase superfamily. CPD1 family.

The protein localises to the golgi apparatus. It catalyses the reaction a nucleoside 2',3'-cyclic phosphate + H2O = a nucleoside 2'-phosphate + H(+). In terms of biological role, involved in the metabolism of ADP-ribose 1',2'-cyclic phosphate which is produced as a consequence of tRNA splicing. This Candida albicans (strain SC5314 / ATCC MYA-2876) (Yeast) protein is 2',3'-cyclic-nucleotide 3'-phosphodiesterase (CPD1).